The following is a 166-amino-acid chain: NADPH-dependent 7-cyano-7-deazaguanine reductase (166 aa).

Cys57 functions as the Thioimide intermediate in the catalytic mechanism. Asp64 acts as the Proton donor in catalysis. Substrate contacts are provided by residues 79 to 81 and 98 to 99; these read VES and HE.

It belongs to the GTP cyclohydrolase I family. QueF type 1 subfamily.

It is found in the cytoplasm. It carries out the reaction 7-aminomethyl-7-carbaguanine + 2 NADP(+) = 7-cyano-7-deazaguanine + 2 NADPH + 3 H(+). It functions in the pathway tRNA modification; tRNA-queuosine biosynthesis. Its function is as follows. Catalyzes the NADPH-dependent reduction of 7-cyano-7-deazaguanine (preQ0) to 7-aminomethyl-7-deazaguanine (preQ1). This Staphylococcus aureus (strain JH1) protein is NADPH-dependent 7-cyano-7-deazaguanine reductase.